We begin with the raw amino-acid sequence, 167 residues long: MGINLSNGDWNRYKKEGFLITKFGDLIDYIMNWARSGSLWPMTFGLACCAVEMMHTASSRYDLDRYGIIFRASPRQADVMIVAGTLTNKMAAALRKVYDQMADPKYVVSMGSCANGGGYYHYSYSVVRGCDRIVPVDVYVPGCPPTAEALLYGMLCLQNKIKRTKNI.

4 residues coordinate [4Fe-4S] cluster: cysteine 48, cysteine 49, cysteine 113, and cysteine 143.

It belongs to the complex I 20 kDa subunit family. As to quaternary structure, NDH-1 is composed of 14 different subunits. Subunits NuoB, C, D, E, F, and G constitute the peripheral sector of the complex. Requires [4Fe-4S] cluster as cofactor.

It localises to the cell membrane. It catalyses the reaction a quinone + NADH + 5 H(+)(in) = a quinol + NAD(+) + 4 H(+)(out). Functionally, NDH-1 shuttles electrons from NADH, via FMN and iron-sulfur (Fe-S) centers, to quinones in the respiratory chain. Couples the redox reaction to proton translocation (for every two electrons transferred, four hydrogen ions are translocated across the cytoplasmic membrane), and thus conserves the redox energy in a proton gradient. This chain is NADH-quinone oxidoreductase subunit B, found in Wolbachia pipientis subsp. Culex pipiens (strain wPip).